The chain runs to 392 residues: Putative RNA-binding protein Luc7-like 2 (392 aa).

Ser-18 carries the post-translational modification Phosphoserine. A coiled-coil region spans residues 102 to 177 (EVAKKRLAET…EAEEVYRNSM (76 aa)). Residues 235 to 257 (KQEKRNQERLKRREEREREEREK) are compositionally biased toward basic and acidic residues. The segment at 235–392 (KQEKRNQERL…SSEEREAGEI (158 aa)) is disordered. A compositionally biased stretch (basic residues) spans 258-321 (LRRSRSHSKN…RSRSHQRSRH (64 aa)). Residues Lys-266 and Lys-269 each carry the 5-hydroxylysine; by JMJD6 modification. Composition is skewed to basic and acidic residues over residues 337 to 364 (KERF…DRDR) and 377 to 392 (RSED…AGEI).

This sequence belongs to the Luc7 family. Interacts with SCNM1.

The protein localises to the nucleus speckle. The protein resides in the nucleus. It is found in the nucleoplasm. May bind to RNA via its Arg/Ser-rich domain. The protein is Putative RNA-binding protein Luc7-like 2 (LUC7L2) of Homo sapiens (Human).